The sequence spans 505 residues: Putative pentatricopeptide repeat-containing protein At1g26500 (505 aa).

PPR repeat units lie at residues 145–179, 180–210, 214–248, 249–279, 285–319, 320–350, and 351–385; these read NDKT…GYLY, NVET…LKEF, DEIT…GFDV, DIEA…MVSK, DGGF…GVYV, DNLT…VENP, and DISI…GCEP.

Belongs to the PPR family. P subfamily.

This chain is Putative pentatricopeptide repeat-containing protein At1g26500, found in Arabidopsis thaliana (Mouse-ear cress).